The following is a 546-amino-acid chain: Chaperonin GroEL (546 aa).

Residues 30 to 33 (TLGP), Lys-51, 87 to 91 (DGTTT), Gly-415, 479 to 481 (NAA), and Asp-495 each bind ATP. The tract at residues 525-546 (PEPKKDMPPMPGGGMGGMGGMY) is disordered. Gly residues predominate over residues 536–546 (GGGMGGMGGMY).

This sequence belongs to the chaperonin (HSP60) family. Forms a cylinder of 14 subunits composed of two heptameric rings stacked back-to-back. Interacts with the co-chaperonin GroES.

It localises to the cytoplasm. The catalysed reaction is ATP + H2O + a folded polypeptide = ADP + phosphate + an unfolded polypeptide.. Together with its co-chaperonin GroES, plays an essential role in assisting protein folding. The GroEL-GroES system forms a nano-cage that allows encapsulation of the non-native substrate proteins and provides a physical environment optimized to promote and accelerate protein folding. This is Chaperonin GroEL from Solidesulfovibrio magneticus (strain ATCC 700980 / DSM 13731 / RS-1) (Desulfovibrio magneticus).